A 473-amino-acid chain; its full sequence is Probable DNA N(6)-methyladenine demethylase ALKBH1B (473 aa).

A 2-oxoglutarate-binding site is contributed by 357–359 (NFY). Residues His-368, Asp-391, and His-449 each contribute to the Fe cation site. 461 to 465 (RLFFR) provides a ligand contact to 2-oxoglutarate.

This sequence belongs to the alkB family. Fe(2+) serves as cofactor. In terms of tissue distribution, undetectable.

It catalyses the reaction an N(6)-methyl-2'-deoxyadenosine in DNA + 2-oxoglutarate + O2 = a 2'-deoxyadenosine in DNA + formaldehyde + succinate + CO2. Dioxygenase that may catalyzes DNA N(6)-methyladenine (6 mA) demethylation. Requires molecular oxygen, alpha-ketoglutarate and iron. In Arabidopsis thaliana (Mouse-ear cress), this protein is Probable DNA N(6)-methyladenine demethylase ALKBH1B.